The sequence spans 847 residues: KN motif and ankyrin repeat domain-containing protein 2 (847 aa).

A disordered region spans residues 1-32 (MAQVLHVPAPFPGTPGQASSAAFPNKEPDPPY). Residues 1-72 (MAQVLHVPAP…PVQRRPRLGS (72 aa)) form an interaction with AIFM1 region. 5 positions are modified to phosphoserine: S19, S83, S86, S89, and S92. R105 is subject to Omega-N-methylarginine. The tract at residues 161–182 (LAGVGLLPPTPRSSGLSTPVAP) is disordered. T170 carries the post-translational modification Phosphothreonine. Coiled-coil stretches lie at residues 187 to 207 (LAHV…LEEQ) and 284 to 311 (EAAL…AQTQ). Position 331 is a phosphothreonine (T331). At S358 the chain carries Phosphoserine. 2 disordered regions span residues 414-473 (GAAR…GGAS) and 502-581 (NGGY…PEEE). Residues 420–433 (DPPPSPAEPSPSSP) show a composition bias toward pro residues. Composition is skewed to low complexity over residues 434–446 (YPAA…APAA) and 506–516 (ESSSEDSSTAE). Phosphoserine is present on S536. One copy of the ANK 0; degenerate repeat lies at 610 to 647 (RELKVAYTTVLQEWLRLACRSDAHPELVRRHLVTFRAM). 5 ANK repeats span residues 662-692 (NGNT…QVDK), 696-729 (AGYS…NVNA), 734-763 (AGQT…DVNM), 767-797 (DGST…DISL), and 801-831 (DGST…KCSF). The interval 665 to 831 (TALHYSVSHA…YSRMNIKCSF (167 aa)) is interaction with NCOA1.

Interacts (non-phosphorylated form) with NCOA1; NCOA2 AND NCOA3. Interacts with AIFM1. Interacts with ARHGDIA; the interaction is direct and may regulate the interaction of ARHGDIA with RHOA, RAC1 and CDC42. Interacts (via ANK repeats 1-5) with KIF21A. Phosphorylated by casein kinase II upon estrogen stimulation. Phosphorylation induces the release by KANK2 of NCOA1 and its translocation to the nucleus where NCOA1 can activate gene transcription. As to expression, expressed by podocytes in kidney glomeruli (at protein level).

The protein localises to the cytoplasm. Its subcellular location is the mitochondrion. Its function is as follows. Involved in transcription regulation by sequestering in the cytoplasm nuclear receptor coactivators such as NCOA1, NCOA2 and NCOA3. Involved in regulation of caspase-independent apoptosis by sequestering the proapoptotic factor AIFM1 in mitochondria. Pro-apoptotic stimuli can induce its proteasomal degradation allowing the translocation of AIFM1 to the nucleus to induce apoptosis. Involved in the negative control of vitamin D receptor signaling pathway. Involved in actin stress fibers formation through its interaction with ARHGDIA and the regulation of the Rho signaling pathway. May thereby play a role in cell adhesion and migration, regulating for instance podocytes migration during development of the kidney. Through the Rho signaling pathway may also regulate cell proliferation. This is KN motif and ankyrin repeat domain-containing protein 2 from Rattus norvegicus (Rat).